The sequence spans 432 residues: Glutamyl-tRNA reductase (432 aa).

Substrate-binding positions include 49–52 (TCNR), Ser-107, 112–114 (ETQ), and Gln-118. Cys-50 acts as the Nucleophile in catalysis. 186–191 (GAGEMG) serves as a coordination point for NADP(+).

It belongs to the glutamyl-tRNA reductase family. In terms of assembly, homodimer.

It carries out the reaction (S)-4-amino-5-oxopentanoate + tRNA(Glu) + NADP(+) = L-glutamyl-tRNA(Glu) + NADPH + H(+). It functions in the pathway porphyrin-containing compound metabolism; protoporphyrin-IX biosynthesis; 5-aminolevulinate from L-glutamyl-tRNA(Glu): step 1/2. Functionally, catalyzes the NADPH-dependent reduction of glutamyl-tRNA(Glu) to glutamate 1-semialdehyde (GSA). This Campylobacter jejuni subsp. doylei (strain ATCC BAA-1458 / RM4099 / 269.97) protein is Glutamyl-tRNA reductase.